Here is a 306-residue protein sequence, read N- to C-terminus: D-aminoacyl-tRNA deacylase (306 aa).

It belongs to the DtdA deacylase family. As to quaternary structure, monomer. Requires Zn(2+) as cofactor.

The enzyme catalyses a D-aminoacyl-tRNA + H2O = a tRNA + a D-alpha-amino acid + H(+). The catalysed reaction is glycyl-tRNA(Ala) + H2O = tRNA(Ala) + glycine + H(+). Its function is as follows. D-aminoacyl-tRNA deacylase with broad substrate specificity. By recycling D-aminoacyl-tRNA to D-amino acids and free tRNA molecules, this enzyme counteracts the toxicity associated with the formation of D-aminoacyl-tRNA entities in vivo. The sequence is that of D-aminoacyl-tRNA deacylase from Methanosarcina barkeri (strain Fusaro / DSM 804).